The primary structure comprises 199 residues: Elongation factor Ts (199 aa).

The segment at 82–85 (TDFV) is involved in Mg(2+) ion dislocation from EF-Tu.

Belongs to the EF-Ts family.

Its subcellular location is the cytoplasm. In terms of biological role, associates with the EF-Tu.GDP complex and induces the exchange of GDP to GTP. It remains bound to the aminoacyl-tRNA.EF-Tu.GTP complex up to the GTP hydrolysis stage on the ribosome. In Leptospira borgpetersenii serovar Hardjo-bovis (strain JB197), this protein is Elongation factor Ts.